Reading from the N-terminus, the 89-residue chain is MALEKEEKSQIINNYQLHETDTGSPEVQVALLTERINQLIEHLRVHIHDHHSRRGLLKLVGRRRRLLNYLQSKDRERYRKVINSLGLRR.

The segment at 1 to 22 is disordered; sequence MALEKEEKSQIINNYQLHETDT. The segment covering 10–22 has biased composition (polar residues); sequence QIINNYQLHETDT.

Belongs to the universal ribosomal protein uS15 family. As to quaternary structure, part of the 30S ribosomal subunit. Forms a bridge to the 50S subunit in the 70S ribosome, contacting the 23S rRNA.

One of the primary rRNA binding proteins, it binds directly to 16S rRNA where it helps nucleate assembly of the platform of the 30S subunit by binding and bridging several RNA helices of the 16S rRNA. In terms of biological role, forms an intersubunit bridge (bridge B4) with the 23S rRNA of the 50S subunit in the ribosome. The sequence is that of Small ribosomal subunit protein uS15 from Chloroflexus aggregans (strain MD-66 / DSM 9485).